Here is a 61-residue protein sequence, read N- to C-terminus: Small ribosomal subunit protein uS14 (61 aa).

Over residues 1–14 the composition is skewed to basic residues; sequence MAKTSQKVRNHRPA. The disordered stretch occupies residues 1–20; the sequence is MAKTSQKVRNHRPAKFSSRE. Cysteine 24, cysteine 27, cysteine 40, and cysteine 43 together coordinate Zn(2+).

This sequence belongs to the universal ribosomal protein uS14 family. Zinc-binding uS14 subfamily. As to quaternary structure, part of the 30S ribosomal subunit. Contacts proteins S3 and S10. Requires Zn(2+) as cofactor.

Its function is as follows. Binds 16S rRNA, required for the assembly of 30S particles and may also be responsible for determining the conformation of the 16S rRNA at the A site. In Lactobacillus delbrueckii subsp. bulgaricus (strain ATCC 11842 / DSM 20081 / BCRC 10696 / JCM 1002 / NBRC 13953 / NCIMB 11778 / NCTC 12712 / WDCM 00102 / Lb 14), this protein is Small ribosomal subunit protein uS14.